The chain runs to 430 residues: Na(+)/H(+) antiporter NhaA 2 (430 aa).

10 helical membrane-spanning segments follow: residues 11–31, 60–80, 97–117, 127–147, 181–201, 215–235, 288–308, 309–329, 356–376, and 393–413; these read FVHG…IAFI, LSLE…LVGL, VALA…LYTA, GWGV…ALLG, LNLT…YAGW, VLLW…GVLL, HALH…TNAG, VPVA…GLLL, WGHM…SLFV, and GVLL…LLGI.

Belongs to the NhaA Na(+)/H(+) (TC 2.A.33) antiporter family.

Its subcellular location is the cell membrane. The enzyme catalyses Na(+)(in) + 2 H(+)(out) = Na(+)(out) + 2 H(+)(in). Na(+)/H(+) antiporter that extrudes sodium in exchange for external protons. This chain is Na(+)/H(+) antiporter NhaA 2, found in Deinococcus geothermalis (strain DSM 11300 / CIP 105573 / AG-3a).